The primary structure comprises 175 residues: ATP synthase subunit b (175 aa).

A helical transmembrane segment spans residues 22-44 (MLVQLFFFLILLALLKKFAWGPL).

The protein belongs to the ATPase B chain family. In terms of assembly, F-type ATPases have 2 components, F(1) - the catalytic core - and F(0) - the membrane proton channel. F(1) has five subunits: alpha(3), beta(3), gamma(1), delta(1), epsilon(1). F(0) has three main subunits: a(1), b(2) and c(10-14). The alpha and beta chains form an alternating ring which encloses part of the gamma chain. F(1) is attached to F(0) by a central stalk formed by the gamma and epsilon chains, while a peripheral stalk is formed by the delta and b chains.

Its subcellular location is the cell membrane. F(1)F(0) ATP synthase produces ATP from ADP in the presence of a proton or sodium gradient. F-type ATPases consist of two structural domains, F(1) containing the extramembraneous catalytic core and F(0) containing the membrane proton channel, linked together by a central stalk and a peripheral stalk. During catalysis, ATP synthesis in the catalytic domain of F(1) is coupled via a rotary mechanism of the central stalk subunits to proton translocation. In terms of biological role, component of the F(0) channel, it forms part of the peripheral stalk, linking F(1) to F(0). The polypeptide is ATP synthase subunit b (Oceanobacillus iheyensis (strain DSM 14371 / CIP 107618 / JCM 11309 / KCTC 3954 / HTE831)).